A 281-amino-acid polypeptide reads, in one-letter code: uncharacterized protein (281 aa).

This is an uncharacterized protein from Bacillus subtilis (strain 168).